Here is a 291-residue protein sequence, read N- to C-terminus: Protein ILRUN (291 aa).

Residues 199–291 (NTQPHRKVEG…LHGPYPFGQS (93 aa)) are disordered. Over residues 212-228 (PFASPQKNRQSDENNLT) the composition is skewed to polar residues. Phosphoserine occurs at positions 215, 222, and 265. The span at 257 to 276 (LSQSSVNLSPSSPANNLSVV) shows a compositional bias: low complexity.

In terms of assembly, interacts with IRF3; the interaction inhibits IRF3 binding to its DNA consensus sequence.

Its subcellular location is the cytoplasm. It localises to the nucleus. Its function is as follows. Negative regulator of innate antiviral response. Blocks IRF3-dependent cytokine production such as IFNA, IFNB and TNF. Interacts with IRF3 and inhibits IRF3 recruitment to type I IFN promoter sequences while also reducing nuclear levels of the coactivators EP300 and CREBBP. The polypeptide is Protein ILRUN (Mus musculus (Mouse)).